The primary structure comprises 141 residues: ATP synthase epsilon chain (141 aa).

This sequence belongs to the ATPase epsilon chain family. In terms of assembly, F-type ATPases have 2 components, CF(1) - the catalytic core - and CF(0) - the membrane proton channel. CF(1) has five subunits: alpha(3), beta(3), gamma(1), delta(1), epsilon(1). CF(0) has three main subunits: a, b and c.

It is found in the cell inner membrane. Produces ATP from ADP in the presence of a proton gradient across the membrane. In Chromohalobacter salexigens (strain ATCC BAA-138 / DSM 3043 / CIP 106854 / NCIMB 13768 / 1H11), this protein is ATP synthase epsilon chain.